Consider the following 119-residue polypeptide: Beta-2-microglobulin (119 aa).

Positions 1–20 (MARFVVVALLVQLSLFGLEA) are cleaved as a signal peptide. An Ig-like C1-type domain is found at 25-114 (PKIQVYSRYP…VTFSTPKTVK (90 aa)). Cys45 and Cys100 form a disulfide bridge.

Belongs to the beta-2-microglobulin family. Heterodimer of an alpha chain and a beta chain. Beta-2-microglobulin is the beta-chain of major histocompatibility complex class I molecules.

It is found in the secreted. Component of the class I major histocompatibility complex (MHC). Involved in the presentation of peptide antigens to the immune system. The protein is Beta-2-microglobulin (B2M) of Saguinus imperator (Emperor tamarin).